The following is a 439-amino-acid chain: Serine--tRNA ligase (439 aa).

242–244 (TAE) contributes to the L-serine binding site. 273-275 (RQE) lines the ATP pocket. Glu-296 provides a ligand contact to L-serine. Position 360–363 (360–363 (EISS)) interacts with ATP. L-serine is bound at residue Ser-396.

This sequence belongs to the class-II aminoacyl-tRNA synthetase family. Type-1 seryl-tRNA synthetase subfamily. Homodimer. The tRNA molecule binds across the dimer.

Its subcellular location is the cytoplasm. The enzyme catalyses tRNA(Ser) + L-serine + ATP = L-seryl-tRNA(Ser) + AMP + diphosphate + H(+). It carries out the reaction tRNA(Sec) + L-serine + ATP = L-seryl-tRNA(Sec) + AMP + diphosphate + H(+). It participates in aminoacyl-tRNA biosynthesis; selenocysteinyl-tRNA(Sec) biosynthesis; L-seryl-tRNA(Sec) from L-serine and tRNA(Sec): step 1/1. Its function is as follows. Catalyzes the attachment of serine to tRNA(Ser). Is also able to aminoacylate tRNA(Sec) with serine, to form the misacylated tRNA L-seryl-tRNA(Sec), which will be further converted into selenocysteinyl-tRNA(Sec). The sequence is that of Serine--tRNA ligase from Oenococcus oeni (strain ATCC BAA-331 / PSU-1).